Here is a 206-residue protein sequence, read N- to C-terminus: Large ribosomal subunit protein uL4 (206 aa).

It belongs to the universal ribosomal protein uL4 family. In terms of assembly, part of the 50S ribosomal subunit.

Functionally, one of the primary rRNA binding proteins, this protein initially binds near the 5'-end of the 23S rRNA. It is important during the early stages of 50S assembly. It makes multiple contacts with different domains of the 23S rRNA in the assembled 50S subunit and ribosome. In terms of biological role, forms part of the polypeptide exit tunnel. The chain is Large ribosomal subunit protein uL4 from Xanthobacter autotrophicus (strain ATCC BAA-1158 / Py2).